The primary structure comprises 624 residues: Vitamin B12 transporter BtuB (624 aa).

The first 21 residues, 1 to 21 (MTIKKYTLLTALSVTAFSGWA), serve as a signal peptide directing secretion. The TonB box signature appears at 31 to 38 (NEMVVTAN). One can recognise a TBDR plug domain in the interval 43–157 (PKSSVLAPVD…IGGVVNIITE (115 aa)). Cyanocob(III)alamin is bound by residues Leu-88, Ser-90, Asn-97, and 115-116 (IS). Residues 160–624 (TLGSTLTAGL…EYYFTGSYNF (465 aa)) enclose the TBDR beta-barrel domain. 3 beta stranded membrane-spanning segments follow: residues 163 to 170 (STLTAGLG), 174 to 183 (YQNYNGSTQQ), and 189 to 200 (TTITLAGNYDYS). Ca(2+) contacts are provided by Asp-204, Gln-216, Asp-218, and Asp-220. The next 2 membrane-spanning stretches (beta stranded) occupy residues 222 to 232 (YLGKMLWLGAN) and 237 to 253 (EQFS…NRSD). Ca(2+) contacts are provided by Tyr-254, Asp-255, and Asp-266. 17 beta stranded membrane-spanning segments follow: residues 268–282 (RSLS…INFS), 284–301 (GGYA…QDYN), 314–330 (TLDD…NTYQ), 333–342 (LGNVGGGLDW), 358–374 (YEQR…QFVG), 376–386 (VTLEGAIRGDD), 390–405 (FGWH…WEFV), 408–422 (YRLI…KAPN), 440–449 (ESTQWEAAIT), 455–464 (LDWRLSAYRN), 481–498 (YYNV…TGSF), 502–517 (PLSH…PRNA), 525–537 (RRAK…QLDW), 543–557 (DWSV…RYDS), 568–582 (PVKL…LAVS), 595–606 (IANLFDKDYEMV), and 612–624 (PGRE…SYNF). Thr-314 is a binding site for cyanocob(III)alamin. Arg-525 contacts cyanocob(III)alamin. A TonB C-terminal box motif is present at residues 607–624 (YGYQTPGREYYFTGSYNF).

The protein belongs to the TonB-dependent receptor family. BtuB (TC 1.B.14.3.1) subfamily.

The protein localises to the cell outer membrane. Functionally, involved in the active translocation of vitamin B12 (cyanocobalamin) across the outer membrane to the periplasmic space. It derives its energy for transport by interacting with the trans-periplasmic membrane protein TonB. The sequence is that of Vitamin B12 transporter BtuB from Yersinia pseudotuberculosis serotype O:1b (strain IP 31758).